Consider the following 380-residue polypeptide: NF-kappa-B inhibitor-like protein 1 (380 aa).

The interval 1-34 (MSNPSPQVPEGEASTSVCRPKSSMASTSRRQRRE) is disordered. Residues 13–28 (ASTSVCRPKSSMASTS) are compositionally biased toward polar residues. 2 ANK repeats span residues 64–93 (GQPPPLHRACARHDAPALCLLLRLGADPAH) and 97–133 (HGDTALHAAARQGPDAYTDFFLPLLSRCPSAMGIKNK). Disordered regions lie at residues 131 to 167 (KNKDGETPGQILGWGPPWDSAEEEEEDEASKEREWRQ) and 185 to 293 (EDDA…RGSL). S150 carries the post-translational modification Phosphoserine. Over residues 150–159 (SAEEEEEDEA) the composition is skewed to acidic residues. 2 stretches are compositionally biased toward basic and acidic residues: residues 204-221 (RMAREHAQKRQQQRETEG) and 236-272 (RQQEEEQRLFRERARAKEEELRESQARRAQEAPRDPV).

In terms of assembly, interacts with CACTIN (via N-terminal domain); the interaction occurs in a pro-inflammatory-independent manner.

The protein localises to the nucleus. In terms of biological role, involved in the regulation of innate immune response. Acts as negative regulator of Toll-like receptor and interferon-regulatory factor (IRF) signaling pathways. Contributes to the negative regulation of transcriptional activation of NF-kappa-B target genes in response to endogenous pro-inflammatory stimuli. In Sus scrofa (Pig), this protein is NF-kappa-B inhibitor-like protein 1 (NFKBIL1).